A 132-amino-acid chain; its full sequence is ATP synthase epsilon chain (132 aa).

The protein belongs to the ATPase epsilon chain family. In terms of assembly, F-type ATPases have 2 components, CF(1) - the catalytic core - and CF(0) - the membrane proton channel. CF(1) has five subunits: alpha(3), beta(3), gamma(1), delta(1), epsilon(1). CF(0) has three main subunits: a, b and c.

The protein localises to the cell inner membrane. Functionally, produces ATP from ADP in the presence of a proton gradient across the membrane. This chain is ATP synthase epsilon chain, found in Jannaschia sp. (strain CCS1).